A 285-amino-acid chain; its full sequence is Acetylglutamate kinase (285 aa).

Residues 69–70 (GG), arginine 91, and asparagine 183 contribute to the substrate site.

This sequence belongs to the acetylglutamate kinase family. ArgB subfamily.

The protein resides in the cytoplasm. The enzyme catalyses N-acetyl-L-glutamate + ATP = N-acetyl-L-glutamyl 5-phosphate + ADP. Its pathway is amino-acid biosynthesis; L-arginine biosynthesis; N(2)-acetyl-L-ornithine from L-glutamate: step 2/4. In terms of biological role, catalyzes the ATP-dependent phosphorylation of N-acetyl-L-glutamate. This is Acetylglutamate kinase from Jannaschia sp. (strain CCS1).